The chain runs to 197 residues: NADH-quinone oxidoreductase subunit C (197 aa).

It belongs to the complex I 30 kDa subunit family. As to quaternary structure, NDH-1 is composed of 14 different subunits. Subunits NuoB, C, D, E, F, and G constitute the peripheral sector of the complex.

Its subcellular location is the cell inner membrane. The catalysed reaction is a quinone + NADH + 5 H(+)(in) = a quinol + NAD(+) + 4 H(+)(out). In terms of biological role, NDH-1 shuttles electrons from NADH, via FMN and iron-sulfur (Fe-S) centers, to quinones in the respiratory chain. The immediate electron acceptor for the enzyme in this species is believed to be ubiquinone. Couples the redox reaction to proton translocation (for every two electrons transferred, four hydrogen ions are translocated across the cytoplasmic membrane), and thus conserves the redox energy in a proton gradient. This is NADH-quinone oxidoreductase subunit C from Neisseria meningitidis serogroup A / serotype 4A (strain DSM 15465 / Z2491).